We begin with the raw amino-acid sequence, 650 residues long: Chaperone protein DnaK (650 aa).

Phosphothreonine; by autocatalysis is present on Thr-200.

Belongs to the heat shock protein 70 family.

Its function is as follows. Acts as a chaperone. The protein is Chaperone protein DnaK of Paraburkholderia phytofirmans (strain DSM 17436 / LMG 22146 / PsJN) (Burkholderia phytofirmans).